A 441-amino-acid polypeptide reads, in one-letter code: UPF0761 membrane protein RSc1559 (441 aa).

6 helical membrane passes run 44–64 (VLSLVPILTVAFALFTAFPMF), 101–121 (GLTAAGLVGLVVTSVMTMLTV), 141–161 (VLVFWALVSFGPVLIGASLSV), 182–202 (VVVGLVPILLSAIAFAMLYVF), 207–227 (LVAWRDAFLAGLVAAVAFEIA), and 248–268 (FAALPIFLLWIYVSWLVTLLG).

The protein belongs to the UPF0761 family.

Its subcellular location is the cell inner membrane. This Ralstonia nicotianae (strain ATCC BAA-1114 / GMI1000) (Ralstonia solanacearum) protein is UPF0761 membrane protein RSc1559.